Here is a 291-residue protein sequence, read N- to C-terminus: DNA repair protein RecO (291 aa).

The protein belongs to the RecO family.

Functionally, involved in DNA repair and RecF pathway recombination. In Cupriavidus pinatubonensis (strain JMP 134 / LMG 1197) (Cupriavidus necator (strain JMP 134)), this protein is DNA repair protein RecO.